The sequence spans 409 residues: uncharacterized protein (409 aa).

Over residues 36-50 (HLKAKARAQESDSDR) the composition is skewed to basic and acidic residues. Disordered stretches follow at residues 36–67 (HLKA…TFSS), 239–298 (IENT…SSTI), and 338–373 (RSQI…TGPR). Low complexity predominate over residues 51–67 (PCSSIESSSEPASTFSS). Residues 245-265 (VREESNQEHPPGKQEKTEKHP) show a composition bias toward basic and acidic residues. Residues 268-281 (LQGSHQAEPETSSK) show a composition bias toward polar residues. Basic and acidic residues-rich tracts occupy residues 282–294 (NSEE…KMDD) and 338–350 (RSQI…EGRR).

This is an uncharacterized protein from Homo sapiens (Human).